A 196-amino-acid polypeptide reads, in one-letter code: uncharacterized protein (196 aa).

Positions R44–A80 are disordered.

This is an uncharacterized protein from Treponema pallidum (strain Nichols).